Consider the following 221-residue polypeptide: 2-amino-5-formylamino-6-ribosylaminopyrimidin-4(3H)-one 5'-monophosphate deformylase (221 aa).

Residues E29, H31, D40, and H108 each coordinate Fe cation.

This sequence belongs to the creatininase superfamily. FAPy deformylase family. In terms of assembly, homodimer. It depends on Fe(2+) as a cofactor. Requires Zn(2+) as cofactor.

It catalyses the reaction 2-amino-5-formylamino-6-(5-phospho-D-ribosylamino)pyrimidin-4(3H)-one + H2O = 2,5-diamino-6-(1-D-ribosylamino)pyrimidin-4(3H)-one 5'-phosphate + formate + H(+). It functions in the pathway cofactor biosynthesis; coenzyme F420 biosynthesis. It participates in cofactor biosynthesis; riboflavin biosynthesis. In terms of biological role, catalyzes the hydrolysis of the formamide of 2-amino-5-formylamino-6-ribosylamino-4(3H)-pyrimidinone 5'-monophosphate (FAPy) to form 2,5-diamino-6-ribosylamino-4(3H)-pyrimidinone 5'-phosphate (APy). The protein is 2-amino-5-formylamino-6-ribosylaminopyrimidin-4(3H)-one 5'-monophosphate deformylase of Methanococcus maripaludis (strain C7 / ATCC BAA-1331).